A 440-amino-acid chain; its full sequence is Cobyrinate a,c-diamide synthase (440 aa).

Residues Arg-247–Arg-428 form the GATase cobBQ-type domain. Cys-329 (nucleophile) is an active-site residue.

This sequence belongs to the CobB/CbiA family. It depends on Mg(2+) as a cofactor.

It carries out the reaction cob(II)yrinate + 2 L-glutamine + 2 ATP + 2 H2O = cob(II)yrinate a,c diamide + 2 L-glutamate + 2 ADP + 2 phosphate + 2 H(+). It participates in cofactor biosynthesis; adenosylcobalamin biosynthesis; cob(II)yrinate a,c-diamide from sirohydrochlorin (anaerobic route): step 10/10. Functionally, catalyzes the ATP-dependent amidation of the two carboxylate groups at positions a and c of cobyrinate, using either L-glutamine or ammonia as the nitrogen source. The protein is Cobyrinate a,c-diamide synthase of Picrophilus torridus (strain ATCC 700027 / DSM 9790 / JCM 10055 / NBRC 100828 / KAW 2/3).